A 697-amino-acid chain; its full sequence is MAR-binding filament-like protein 1 (697 aa).

The transit peptide at 1–41 (MATSCFPPFSASSSSLCSSQFTPLLSCPRNTQICRKKRPVM) directs the protein to the chloroplast. The transit peptide at 42–79 (ASMHSENQKESNVCNRRSILFVGFSVLPLLNLRARALE) directs the protein to the thylakoid. Topologically, residues 80 to 106 (GLSTDSQAQPQKEETEQTIQGSAGNPF) are lumenal, thylakoid. Residues 81 to 100 (LSTDSQAQPQKEETEQTIQG) form a disordered region. A helical transmembrane segment spans residues 107–127 (VSLLNGLGVVGSGVLGSLYAL). The Stromal segment spans residues 128–697 (ARNEKAVSDA…GEKEKVNVQQ (570 aa)). A coiled-coil region spans residues 203 to 671 (LQNEKKLAED…KGEILRLRSQ (469 aa)). The segment at 599–629 (TSRNSSLEDEREVHRQSVSEQKQISQEAQEN) is disordered. Basic and acidic residues predominate over residues 604-615 (SLEDEREVHRQS). Over residues 616 to 627 (VSEQKQISQEAQ) the composition is skewed to polar residues.

Interacts with MAF1. Interacts with PTST2; the interaction is essential for the initiation of starch granules biosynthesis in leaf chloroplasts, for the correct location of the process in the stromal spaces between the thylakoid membranes, and for the association of PTST2 with the thylakoid membranes. Post-translationally, phosphorylated in vitro by human casein kinase II. Predicted to be translocated into the thylakoid by the Tat system.

It is found in the plastid. The protein localises to the chloroplast. Its subcellular location is the chloroplast thylakoid membrane. The protein resides in the chloroplast stroma. It localises to the chloroplast nucleoid. It is found in the nucleus. The protein localises to the nucleus matrix. Its function is as follows. Required for the initiation of starch granules biosynthesis in leaf chloroplasts. Anchored to the thylakoid membranes with its C-terminus facing into the stroma where it is essential for localizing PTST2 and SS4 to the stromal spaces between the thylakoid membranes in order to begin starch granule formation. Associated with leaf chloroplastic nucleoids in vivo. Binds to various chloroplastic double-stranded DNA fragments without particular sequence specificity in vitro. May function at the interface between nucleoids and thylakoids possibly by anchoring nucleoids to the thylakoid membrane system in mature chloroplasts. Binds nuclear DNA. Interacts with chromatin via matrix attachment regions (MARs). Likely to participate in nuclear architecture by connecting chromatin with the nuclear matrix and potentially with the nuclear envelope. In Solanum lycopersicum (Tomato), this protein is MAR-binding filament-like protein 1.